A 393-amino-acid chain; its full sequence is Pyrimidine monooxygenase RutA (393 aa).

FMN contacts are provided by residues 79–80, asparagine 145, glutamate 154, 170–171, and serine 220; these read IK and RY.

Belongs to the NtaA/SnaA/DszA monooxygenase family. RutA subfamily.

It carries out the reaction uracil + FMNH2 + NADH + O2 = (Z)-3-ureidoacrylate + FMN + NAD(+) + H2O + H(+). It catalyses the reaction thymine + FMNH2 + NADH + O2 = (Z)-2-methylureidoacrylate + FMN + NAD(+) + H2O + H(+). In terms of biological role, catalyzes the pyrimidine ring opening between N-3 and C-4 by an unusual flavin hydroperoxide-catalyzed mechanism, adding oxygen atoms in the process to yield ureidoacrylate peracid, that immediately reacts with FMN forming ureidoacrylate and FMN-N(5)-oxide. The FMN-N(5)-oxide reacts spontaneously with NADH to produce FMN. Requires the flavin reductase RutF to regenerate FMN in vivo. The chain is Pyrimidine monooxygenase RutA from Escherichia coli O139:H28 (strain E24377A / ETEC).